The primary structure comprises 124 residues: Large ribosomal subunit protein bL12 (124 aa).

The protein belongs to the bacterial ribosomal protein bL12 family. Homodimer. Part of the ribosomal stalk of the 50S ribosomal subunit. Forms a multimeric L10(L12)X complex, where L10 forms an elongated spine to which 2 to 4 L12 dimers bind in a sequential fashion. Binds GTP-bound translation factors.

Its function is as follows. Forms part of the ribosomal stalk which helps the ribosome interact with GTP-bound translation factors. Is thus essential for accurate translation. In Desulfitobacterium hafniense (strain DSM 10664 / DCB-2), this protein is Large ribosomal subunit protein bL12.